A 416-amino-acid chain; its full sequence is Keratin, type I cuticular Ha1 (416 aa).

A head region spans residues 1 to 56 (MPYNFCLPSLSCRTSCSSRPCVPPSCHSCTLPGACNIPANVSNCNWFCEGSFNGSE). The region spanning 56–367 (EKETMQFLND…SLLESEDCNL (312 aa)) is the IF rod domain. A coil 1A region spans residues 57-91 (KETMQFLNDRLASYLEKVRQLERDNAELENLIRER). A linker 1 region spans residues 92–102 (SQQQEPLLCPS). The interval 103-203 (YQSYFKTIEE…HEQEVNTLRC (101 aa)) is coil 1B. Positions 204-219 (QLGDRLNVEVDAAPTV) are linker 12. A coil 2 region spans residues 220–363 (DLNRVLNETR…NTYRSLLESE (144 aa)). The interval 364 to 416 (DCNLPSNPCATTNACSKPIGPCLSNPCTSCVPPAPCTPCAPRPRCGPCNSFVR) is tail.

Belongs to the intermediate filament family. In terms of tissue distribution, present in scalp but not in hairless skin. Abundantly expressed in the differentiating cortex of growing (anagen) hair. Expression is restricted to the keratinocytes of the hair cortex and is absent from inner root sheath and medulla.

The protein is Keratin, type I cuticular Ha1 (KRT31) of Homo sapiens (Human).